Reading from the N-terminus, the 689-residue chain is Beta-adrenergic receptor kinase 1 (689 aa).

The interval 1–190 (MADLEAVLAD…ELNIHLTMND (190 aa)) is N-terminal. The RGS domain occupies 54-175 (TFEKIFSQKL…IESDKFTRFC (122 aa)). Residues 191 to 453 (FSVHRIIGRG…AQEVKESPFF (263 aa)) enclose the Protein kinase domain. Residues 197–205 (IGRGGFGEV) and K220 each bind ATP. The active-site Proton acceptor is the D317. In terms of domain architecture, AGC-kinase C-terminal spans 454-521 (RSLDWQMVFL…TISERWQQEV (68 aa)). The PH domain occupies 558–652 (DCIMHGYMSK…WKKELRDAYR (95 aa)). S670 is modified (phosphoserine).

This sequence belongs to the protein kinase superfamily. AGC Ser/Thr protein kinase family. GPRK subfamily. In terms of assembly, interacts with the heterodimer formed by GNB1 and GNG2. Interacts with GIT1. Interacts with, and phosphorylates chemokine-stimulated CCR5. Interacts with ARRB1. Interacts with LPAR1 and LPAR2. Interacts with RALA in response to LPAR1 activation. ADRBK1 and RALA mutually inhibit each other's binding to LPAR1. Interacts with ADRB2. Expressed in peripheral blood leukocytes.

The protein resides in the cytoplasm. Its subcellular location is the cell membrane. It localises to the postsynapse. The protein localises to the presynapse. The catalysed reaction is [beta-adrenergic receptor] + ATP = [beta-adrenergic receptor]-phosphate + ADP + H(+). In contrast to other AGC family kinases, the catalytic activity is solely regulated by the binding of substrates and ligands, not by phosphorylation of the kinase domain. In terms of biological role, specifically phosphorylates the agonist-occupied form of the beta-adrenergic and closely related receptors, probably inducing a desensitization of them. Key regulator of LPAR1 signaling. Competes with RALA for binding to LPAR1 thus affecting the signaling properties of the receptor. Desensitizes LPAR1 and LPAR2 in a phosphorylation-independent manner. Positively regulates ciliary smoothened (SMO)-dependent Hedgehog (Hh) signaling pathway by facilitating the trafficking of SMO into the cilium and the stimulation of SMO activity. Inhibits relaxation of airway smooth muscle in response to blue light. The sequence is that of Beta-adrenergic receptor kinase 1 from Homo sapiens (Human).